We begin with the raw amino-acid sequence, 94 residues long: Protein translocase subunit SecE (94 aa).

A disordered region spans residues 1–32; sequence MTDAVGSIDTPDAQDEVPESKKTRKGGKRAKK. Positions 22–32 are enriched in basic residues; it reads KTRKGGKRAKK. The chain crosses the membrane as a helical span at residues 59-81; that stretch reads QLTSYTTVVIFFVAIMIRLVTVI.

Belongs to the SecE/SEC61-gamma family. As to quaternary structure, component of the Sec protein translocase complex. Heterotrimer consisting of SecY, SecE and SecG subunits. The heterotrimers can form oligomers, although 1 heterotrimer is thought to be able to translocate proteins. Interacts with the ribosome. Interacts with SecDF, and other proteins may be involved. Interacts with SecA.

It is found in the cell membrane. Its function is as follows. Essential subunit of the Sec protein translocation channel SecYEG. Clamps together the 2 halves of SecY. May contact the channel plug during translocation. The polypeptide is Protein translocase subunit SecE (Streptomyces galbus).